Reading from the N-terminus, the 257-residue chain is MEVIPAIDLLDGRCVRLYQGDYQQSQVFSENPVEVARQWVEQGANRLHLVDLDGAKAGKPVNLSAIEAIVRAVSIPVQVGGGLRDRSSVAQLLNLGVNRVILGTIAVENPQLVQQLSQEFPGQIVVGIDAREGKVATRGWLETSEVQATELAQNMAHLGVAAIIYTDIHRDGTLKGPNIPALRELATAVNVPVIASGGVSSLTDLLSLLALEPSGVTGVIVGRALYTGEVDLSEAIQAVGQGRWQDIPPDLGSSAFA.

Asp8 functions as the Proton acceptor in the catalytic mechanism. The active-site Proton donor is the Asp129.

Belongs to the HisA/HisF family.

The protein localises to the cytoplasm. The catalysed reaction is 1-(5-phospho-beta-D-ribosyl)-5-[(5-phospho-beta-D-ribosylamino)methylideneamino]imidazole-4-carboxamide = 5-[(5-phospho-1-deoxy-D-ribulos-1-ylimino)methylamino]-1-(5-phospho-beta-D-ribosyl)imidazole-4-carboxamide. The protein operates within amino-acid biosynthesis; L-histidine biosynthesis; L-histidine from 5-phospho-alpha-D-ribose 1-diphosphate: step 4/9. This Gloeothece citriformis (strain PCC 7424) (Cyanothece sp. (strain PCC 7424)) protein is 1-(5-phosphoribosyl)-5-[(5-phosphoribosylamino)methylideneamino] imidazole-4-carboxamide isomerase.